The following is a 96-amino-acid chain: Large ribosomal subunit protein eL43 (96 aa).

The C4-type zinc finger occupies 39–60; the sequence is CTFCGKTATKRTCVGIWKCKKC.

The protein belongs to the eukaryotic ribosomal protein eL43 family. In terms of assembly, component of the large ribosomal subunit. Mature ribosomes consist of a small (40S) and a large (60S) subunit. The 40S subunit contains about 32 different proteins and 1 molecule of RNA (18S). The 60S subunit contains about 42 different proteins and 3 molecules of RNA (28S, 5.8S and 5S).

Its subcellular location is the cytoplasm. In terms of biological role, component of the ribosome, a large ribonucleoprotein complex responsible for the synthesis of proteins in the cell. The small ribosomal subunit (SSU) binds messenger RNAs (mRNAs) and translates the encoded message by selecting cognate aminoacyl-transfer RNA (tRNA) molecules. The large subunit (LSU) contains the ribosomal catalytic site termed the peptidyl transferase center (PTC), which catalyzes the formation of peptide bonds, thereby polymerizing the amino acids delivered by tRNAs into a polypeptide chain. The nascent polypeptides leave the ribosome through a tunnel in the LSU and interact with protein factors that function in enzymatic processing, targeting, and the membrane insertion of nascent chains at the exit of the ribosomal tunnel. This Plasmodium falciparum (isolate 3D7) protein is Large ribosomal subunit protein eL43.